The sequence spans 281 residues: MSGLEAQQALFASNGDAIILGRIGSLEVRLANSRAAIQAAQELRFRVFFEEMGARKETIEAVEQRDADRFDTICDHLLVYDTALPVPEHQQIVGTYRLMRNEQAEKALGFYSADEYDVQRLKLSRPNLRLLELGRSCVKPEYRSKRTVELLWQGAWAYCRRHSIDVMFGCASFHGAVPAAHALGLSFLHHNCRATDDWDVRALPHRYQAMDLMPKEAINNKVALFSMPPLVKGYLRLGAMIGDGAVIDEAFGTTDVFIILPIERISSRYISYYGAEANRFV.

Belongs to the acetyltransferase family. OlsB subfamily.

It carries out the reaction a (3R)-hydroxyacyl-[ACP] + L-ornithine = a lyso-ornithine lipid + holo-[ACP] + H(+). The protein operates within lipid metabolism. In terms of biological role, catalyzes the first step in the biosynthesis of ornithine lipids, which are phosphorus-free membrane lipids. Catalyzes the 3-hydroxyacyl-acyl carrier protein-dependent acylation of ornithine to form lyso-ornithine lipid (LOL). This chain is L-ornithine N(alpha)-acyltransferase, found in Brucella abortus (strain 2308).